The primary structure comprises 360 residues: DNA replication and repair protein RecF (360 aa).

Position 33-40 (33-40 (GENGSGKT)) interacts with ATP.

This sequence belongs to the RecF family.

It localises to the cytoplasm. Its function is as follows. The RecF protein is involved in DNA metabolism; it is required for DNA replication and normal SOS inducibility. RecF binds preferentially to single-stranded, linear DNA. It also seems to bind ATP. The sequence is that of DNA replication and repair protein RecF from Rickettsia africae (strain ESF-5).